Reading from the N-terminus, the 598-residue chain is Probable translation initiation factor IF-2 (598 aa).

Positions 3–225 constitute a tr-type G domain; it reads LRCPIVSVLG…GLAQKFLEQK (223 aa). Positions 12 to 19 are G1; the sequence is GHVDHGKT. 12–19 is a binding site for GTP; it reads GHVDHGKT. The G2 stretch occupies residues 37-41; the sequence is GITQH. The tract at residues 76–79 is G3; sequence DTPG. Residues 76-80 and 130-133 contribute to the GTP site; these read DTPGH and NKLD. The segment at 130–133 is G4; it reads NKLD. Residues 200 to 202 are G5; sequence SAI.

This sequence belongs to the TRAFAC class translation factor GTPase superfamily. Classic translation factor GTPase family. IF-2 subfamily.

Its function is as follows. Function in general translation initiation by promoting the binding of the formylmethionine-tRNA to ribosomes. Seems to function along with eIF-2. This is Probable translation initiation factor IF-2 from Methanococcus vannielii (strain ATCC 35089 / DSM 1224 / JCM 13029 / OCM 148 / SB).